Consider the following 772-residue polypeptide: RNA exonuclease 5 (772 aa).

The segment covering 1–10 (MEPEREGTER) has biased composition (basic and acidic residues). Positions 1–26 (MEPEREGTERHPRKVRKRRQAPNKLV) are disordered. Positions 11-21 (HPRKVRKRRQA) are enriched in basic residues. The Exonuclease domain maps to 228–376 (LFGLDCEMCL…EDARIILELA (149 aa)). RRM domains lie at 505-579 (STVY…RPVT) and 600-679 (GSIY…RHLH).

This Macaca fascicularis (Crab-eating macaque) protein is RNA exonuclease 5 (REXO5).